Here is a 269-residue protein sequence, read N- to C-terminus: Cell wall protein TIR3 (269 aa).

A signal peptide spans M1–A22. A disordered region spans residues S128–K242. N-linked (GlcNAc...) asparagine glycosylation occurs at N234. The GPI-anchor amidated glycine moiety is linked to residue G245. A propeptide spans A246–L269 (removed in mature form).

This sequence belongs to the SRP1/TIP1 family. In terms of processing, extensively O-glycosylated. The GPI-anchor is attached to the protein in the endoplasmic reticulum and serves to target the protein to the cell surface. There, the glucosamine-inositol phospholipid moiety is cleaved off and the GPI-modified mannoprotein is covalently attached via its lipidless GPI glycan remnant to the 1,6-beta-glucan of the outer cell wall layer.

The protein resides in the secreted. The protein localises to the cell wall. It localises to the membrane. Functionally, component of the cell wall. Required for anaerobic growth. In Saccharomyces cerevisiae (strain ATCC 204508 / S288c) (Baker's yeast), this protein is Cell wall protein TIR3 (TIR3).